The chain runs to 126 residues: Small ribosomal subunit protein uS13c (126 aa).

The segment at 100 to 126 (GQRTRTNARTRRGARQTVAGKKKAPSK) is disordered. The segment covering 101-126 (QRTRTNARTRRGARQTVAGKKKAPSK) has biased composition (basic residues).

The protein belongs to the universal ribosomal protein uS13 family. In terms of assembly, part of the 30S ribosomal subunit.

Its subcellular location is the plastid. It localises to the cyanelle. Its function is as follows. Located at the top of the head of the 30S subunit, it contacts several helices of the 16S rRNA. The polypeptide is Small ribosomal subunit protein uS13c (Cyanophora paradoxa).